The chain runs to 247 residues: Ribonuclease PH (247 aa).

Phosphate is bound by residues arginine 90 and 128–130 (GTR).

This sequence belongs to the RNase PH family. Homohexameric ring arranged as a trimer of dimers.

It catalyses the reaction tRNA(n+1) + phosphate = tRNA(n) + a ribonucleoside 5'-diphosphate. Its function is as follows. Phosphorolytic 3'-5' exoribonuclease that plays an important role in tRNA 3'-end maturation. Removes nucleotide residues following the 3'-CCA terminus of tRNAs; can also add nucleotides to the ends of RNA molecules by using nucleoside diphosphates as substrates, but this may not be physiologically important. Probably plays a role in initiation of 16S rRNA degradation (leading to ribosome degradation) during starvation. In Synechococcus sp. (strain CC9605), this protein is Ribonuclease PH.